Consider the following 364-residue polypeptide: ERCC4 domain-containing protein EP364R (364 aa).

The region spanning 3–102 is the ERCC4 domain; sequence FLVADHREHH…QLYFFVEGPA (100 aa). Positions 319-328 are enriched in polar residues; sequence ASRPATQPAA. The segment at 319-352 is disordered; that stretch reads ASRPATQPAATQPLHEVSDDATSNASDTSSPIGH. The span at 338 to 348 shows a compositional bias: low complexity; sequence DATSNASDTSS.

It belongs to the asfivirus EP364R family.

Plays a role in the inhibition of type I interferon signaling pathway. Mechanistically, specifically interacts with 2',3'-cGAMP and cleaves it via its phosphodiesterase activity. In turn, prevents 2',3'-cGAMP interaction with host ER-resident STING1 leading to inhibition of downstream signaling pathway and type I interferon production. The protein is ERCC4 domain-containing protein EP364R of African swine fever virus (strain Badajoz 1971 Vero-adapted) (Ba71V).